A 193-amino-acid polypeptide reads, in one-letter code: Thymidine kinase (193 aa).

ATP-binding positions include glycine 16–serine 23 and aspartate 89–glutamine 92. Glutamate 90 acts as the Proton acceptor in catalysis. 4 residues coordinate Zn(2+): cysteine 146, cysteine 149, cysteine 184, and cysteine 187.

The protein belongs to the thymidine kinase family. Homotetramer.

The protein localises to the cytoplasm. The catalysed reaction is thymidine + ATP = dTMP + ADP + H(+). The sequence is that of Thymidine kinase from Thermoanaerobacter pseudethanolicus (strain ATCC 33223 / 39E) (Clostridium thermohydrosulfuricum).